A 437-amino-acid polypeptide reads, in one-letter code: Lipopolysaccharide biosynthesis protein RfbH (437 aa).

Belongs to the DegT/DnrJ/EryC1 family. Pyridoxal 5'-phosphate is required as a cofactor.

The protein operates within bacterial outer membrane biogenesis; LPS O-antigen biosynthesis. The chain is Lipopolysaccharide biosynthesis protein RfbH (rfbH) from Salmonella typhimurium (strain LT2 / SGSC1412 / ATCC 700720).